The chain runs to 60 residues: Protein K12 (60 aa).

The chain is Protein K12 (K12) from Human herpesvirus 8 type P (isolate GK18) (HHV-8).